The primary structure comprises 390 residues: Protein STRICTOSIDINE SYNTHASE-LIKE 3 (390 aa).

A signal peptide spans 1 to 25 (MAMSILAKIFLVFAIYCAIDPFSHS). N-linked (GlcNAc...) asparagine glycosylation is found at Asn-95 and Asn-108.

It belongs to the strictosidine synthase family.

It localises to the vacuole. The sequence is that of Protein STRICTOSIDINE SYNTHASE-LIKE 3 from Arabidopsis thaliana (Mouse-ear cress).